Here is a 204-residue protein sequence, read N- to C-terminus: MDFYGRREQYGGYGGYGGGGALATPGYAPAAPYGMSQVNIEGNGCGRTLPPQPTVKVYCRANPNYAMTARNGAVVLAPANPKDEYQHWIKDMRWSTSIKDEEGYPAFALVNKATGQAIKHSLGQSHPVRLVPYNPEVMDESVLWTESRDVGNGFRCIRMVNNIYLNFDAFHGDKYHGGVRDGTDIVLWKWCEGDNQRWKIQPYY.

The region spanning 54-200 (TVKVYCRANP…CEGDNQRWKI (147 aa)) is the Ricin B-type lectin domain.

In terms of tissue distribution, expressed in shoots and lamina.

Its function is as follows. Lectin which binds carbohydrates in vitro. Interacts through its lectin domain with glycan structures containing specific motifs. The chain is Ricin B-like lectin R40G3 from Oryza sativa subsp. japonica (Rice).